The chain runs to 176 residues: Peptide deformylase (176 aa).

Residues cysteine 94 and histidine 136 each contribute to the Fe cation site. Residue glutamate 137 is part of the active site. Histidine 140 contacts Fe cation.

Belongs to the polypeptide deformylase family. Requires Fe(2+) as cofactor.

The enzyme catalyses N-terminal N-formyl-L-methionyl-[peptide] + H2O = N-terminal L-methionyl-[peptide] + formate. In terms of biological role, removes the formyl group from the N-terminal Met of newly synthesized proteins. Requires at least a dipeptide for an efficient rate of reaction. N-terminal L-methionine is a prerequisite for activity but the enzyme has broad specificity at other positions. The polypeptide is Peptide deformylase (Bartonella quintana (strain Toulouse) (Rochalimaea quintana)).